The chain runs to 977 residues: MISSKNGAAMISRPVFLSDRVDEVFSRKLDLSVSSSSSSSLLQQFNKTHEGDDDARLALAHQLYKGGDFKQALEHSNMVYQRNPLRTDNLLLIGAIYYQLQEYDMCIARNEEALRIQPQFAECYGNMANAWKEKGDTDRAIRYYLIAIELRPNFADAWSNLASAYMRKGRLSEATQCCQQALSLNPLLVDAHSNLGNLMKAQGLIHEAYSCYLEAVRIQPTFAIAWSNLAGLFMESGDLNRALQYYKEAVKLKPAFPDAYLNLGNVYKALGRPTEAIMCYQHALQMRPNSAMAFGNIASIYYEQGQLDLAIRHYKQALSRDPRFLEAYNNLGNALKDIGRVDEAVRCYNQCLALQPNHPQAMANLGNIYMEWNMMGPASSLFKATLAVTTGLSAPFNNLAIIYKQQGNYSDAISCYNEVLRIDPLAADALVNRGNTYKEIGRVTEAIQDYMHAINFRPTMAEAHANLASAYKDSGHVEAAITSYKQALLLRPDFPEATCNLLHTLQCVCCWEDRSKMFAEVESIIRRQINMSVLPSVQPFHAIAYPIDPILALEISRKYAAHCSIIASRFGLPPFTHPAGLPVKREGGFKRLRIGYVSSDFGNHPLSHLMGSVFGMHNRENVEVFCYALSANDNTEWRQRIQSEAEHFLDVSAMSSDAIAKIINQDKIQILINLNGYTKGARNEIFAMQPAPIQVSYMGFPGTTGATYIDYLVTDEFVSPLQYAHIYSEKLVHLPHCYFVNDYKQKNQDVLDPNSKPKRSDYGLPEDKFIFACFNQLYKMDPEIVNTWCNILKRVPNSALWLLRFPAAGEMRFRTYAAAQGVQPDQIIFTDVAMKSEHIRRSVLADVILDTPLCNGHTTGTDVLWAGVPMITLPLEKMATRVAGSLCLATGLGHGMIVNSLEEYEEKAVSLALNKPKLQALTKELRASRLTCPLFDTMRWVKNLERSYFKMWNLHCSGQQPQHFKVLENDLEFPHDR.

TPR repeat units follow at residues 2 to 35 (ISSKNGAAMISRPVFLSDRVDEVFSRKLDLSVSS), 53 to 86 (DDARLALAHQLYKGGDFKQALEHSNMVYQRNPLR), 87 to 120 (TDNLLLIGAIYYQLQEYDMCIARNEEALRIQPQF), 121 to 154 (AECYGNMANAWKEKGDTDRAIRYYLIAIELRPNF), 155 to 188 (ADAWSNLASAYMRKGRLSEATQCCQQALSLNPLL), 189 to 222 (VDAHSNLGNLMKAQGLIHEAYSCYLEAVRIQPTF), 223 to 256 (AIAWSNLAGLFMESGDLNRALQYYKEAVKLKPAF), 257 to 290 (PDAYLNLGNVYKALGRPTEAIMCYQHALQMRPNS), 291 to 324 (AMAFGNIASIYYEQGQLDLAIRHYKQALSRDPRF), 325 to 358 (LEAYNNLGNALKDIGRVDEAVRCYNQCLALQPNH), 359 to 392 (PQAMANLGNIYMEWNMMGPASSLFKATLAVTTGL), 393 to 426 (SAPFNNLAIIYKQQGNYSDAISCYNEVLRIDPLA), 427 to 460 (ADALVNRGNTYKEIGRVTEAIQDYMHAINFRPTM), and 461 to 494 (AEAHANLASAYKDSGHVEAAITSYKQALLLRPDF). Residues 495 to 977 (PEATCNLLHT…ENDLEFPHDR (483 aa)) are catalytic region.

The protein belongs to the glycosyltransferase 41 family. O-GlcNAc transferase subfamily. As to quaternary structure, interacts with TCP14 and TCP15. Interacts with ATX1.

It catalyses the reaction L-seryl-[protein] + UDP-N-acetyl-alpha-D-glucosamine = 3-O-(N-acetyl-beta-D-glucosaminyl)-L-seryl-[protein] + UDP + H(+). It carries out the reaction L-threonyl-[protein] + UDP-N-acetyl-alpha-D-glucosamine = 3-O-(N-acetyl-beta-D-glucosaminyl)-L-threonyl-[protein] + UDP + H(+). The protein operates within protein modification; protein glycosylation. Its function is as follows. O-linked N-acetylglucosamine transferase (OGT) that mediates O-glycosylation of capsid protein (CP) of virus in case of infection by Plum pox virus. OGTs catalyze the addition of nucleotide-activated sugars directly onto the polypeptide through O-glycosidic linkage with the hydroxyl of serine or threonine. Probably acts by adding O-linked sugars to yet unknown proteins. Its OGT activity has been proved in vitro but not in vivo. Required with SPY for gamete and seed development. Mediates O-glycosylation of the DELLA protein RGA, a repressor of the gibberellin (GA) signaling pathway. O-glycosylation by SEC inhibits RGA binding to four of its interactors PIF3, PIF4, JAZ1, and BZR1 that are key regulators in light, jasmonate, and brassinosteroid signaling pathways, respectively. Activates ATX1 through O-GlcNAc modification to augment ATX1-mediated H3K4me3 histone epigenetic modification at FLC locus, thus preventing premature flowering. The polypeptide is Probable UDP-N-acetylglucosamine--peptide N-acetylglucosaminyltransferase SEC (Arabidopsis thaliana (Mouse-ear cress)).